Consider the following 313-residue polypeptide: Protein FixB (313 aa).

255–283 (LYLAVGISGQIQHMVGANASQTIFAINKD) serves as a coordination point for FAD.

Belongs to the ETF alpha-subunit/FixB family. In terms of assembly, heterodimer of FixA and FixB.

The protein operates within amine and polyamine metabolism; carnitine metabolism. Functionally, required for anaerobic carnitine reduction. May bring reductant to CaiA. The polypeptide is Protein FixB (Escherichia coli O1:K1 / APEC).